An 85-amino-acid chain; its full sequence is U4-theraphotoxin-Hhn1a (85 aa).

Residues 1–22 (MKVTLIAILTCAAVLVLHTTAA) form the signal peptide. A propeptide spanning residues 23-48 (EELEAESQLMEVGMPDTELEAVDEER) is cleaved from the precursor. Disulfide bonds link cysteine 52/cysteine 66, cysteine 56/cysteine 77, and cysteine 71/cysteine 82.

Belongs to the neurotoxin 12 (Hwtx-2) family. 02 (Hwtx-2) subfamily. As to quaternary structure, monomer. As to expression, expressed by the venom gland.

It is found in the secreted. Functionally, neurotoxin active on both insects and mammals. The chain is U4-theraphotoxin-Hhn1a from Cyriopagopus hainanus (Chinese bird spider).